The primary structure comprises 718 residues: Protein Hook homolog 3 (718 aa).

Met-1 carries the post-translational modification N-acetylmethionine. A sufficient for interaction with microtubules region spans residues 1 to 164 (MFNVESVERV…QELMSKESPV (164 aa)). The residue at position 6 (Ser-6) is a Phosphoserine. One can recognise a Calponin-homology (CH) domain in the interval 10 to 126 (VELCESLLTW…RMLQLILGCA (117 aa)). Coiled coils occupy residues 168-433 (HDAY…VQAQ) and 462-663 (EIRE…MEEK). Ser-238 carries the post-translational modification Phosphoserine. The segment at 450-671 (SSDSLAAEIV…EKYIVSAWYN (222 aa)) is sufficient for interaction with IIGP1. The required for association with Golgi stretch occupies residues 553–718 (EKLHEANNEL…PGHVQPATAR (166 aa)). Positions 682–718 (EDRLASTGSGQSFLARQRQATSTRRSYPGHVQPATAR) are disordered. Residues 687 to 706 (STGSGQSFLARQRQATSTRR) show a composition bias toward polar residues. 2 positions are modified to phosphoserine: Ser-693 and Ser-707.

The protein belongs to the hook family. As to quaternary structure, self-associates. Component of the FTS/Hook/FHIP complex (FHF complex), composed of AKTIP/FTS, FHIP1B, and one or more members of the Hook family of proteins HOOK1, HOOK2, and HOOK3. May interact directly with AKTIP/FTS, HOOK1 and HOOK2. Associates with several subunits of the homotypic vesicular sorting complex (the HOPS complex) including VPS16 and VPS41; these interactions may be indirect. Interacts with IIGP1. Interacts with MSR1, and this association is stimulated by ligand binding to MSR1. Interacts with microtubules. Part of a tripartite complex with dynein and dynactin, acts an adapter linking the dynein motor complex and dynactin. Interacts with dynein intermediate chain and dynactin (DCTN1). Interacts with CCDC181. Interacts with LRGUK. (Microbial infection) Interacts with Salmonella typhimurium spiC. In terms of tissue distribution, expressed in brain, cerebellum, heart, intestine, kidney, liver, lung, skeletal muscle, spleen and stomach (at protein level).

Its subcellular location is the cytoplasm. It is found in the cytoskeleton. The protein resides in the golgi apparatus. Functionally, acts as an adapter protein linking the dynein motor complex to various cargos and converts dynein from a non-processive to a highly processive motor in the presence of dynactin. Facilitates the interaction between dynein and dynactin and activates dynein processivity (the ability to move along a microtubule for a long distance without falling off the track). Predominantly recruits 2 dyneins, which increases both the force and speed of the microtubule motor. Component of the FTS/Hook/FHIP complex (FHF complex). The FHF complex may function to promote vesicle trafficking and/or fusion via the homotypic vesicular protein sorting complex (the HOPS complex). May regulate clearance of endocytosed receptors such as MSR1. Participates in defining the architecture and localization of the Golgi complex. FHF complex promotes the distribution of AP-4 complex to the perinuclear area of the cell. Its function is as follows. (Microbial infection) Serves as a target for the spiC protein from Salmonella typhimurium, which inactivates it, leading to a strong alteration in cellular trafficking. The polypeptide is Protein Hook homolog 3 (Hook3) (Mus musculus (Mouse)).